The following is a 413-amino-acid chain: PAB1-binding protein 2 (413 aa).

Low complexity predominate over residues 1-23 (MSTETTKPSITTTPTTVLVSPNT). The segment at 1 to 36 (MSTETTKPSITTTPTTVLVSPNTLKRKKGEDTSEEQ) is disordered. KH domains are found at residues 66-130 (DVHL…YGMI), 148-213 (EISI…TFYI), and 330-394 (FVQQ…IMLI).

In terms of assembly, interacts with PAB1.

The protein resides in the nucleus. The protein is PAB1-binding protein 2 (PBP2) of Saccharomyces cerevisiae (strain ATCC 204508 / S288c) (Baker's yeast).